Consider the following 1235-residue polypeptide: Serine/threonine-protein kinase TAO2 (1235 aa).

A Phosphoserine modification is found at serine 9. In terms of domain architecture, Protein kinase spans 28–281 (FSDLREIGHG…SEVLLKHRFV (254 aa)). Residues 34–42 (IGHGSFGAV) and lysine 57 each bind ATP. Residue 106 to 108 (EYC) participates in staurosporine binding. The active-site Proton acceptor is the aspartate 151. Glycine 155 lines the staurosporine pocket. A Phosphoserine modification is found at serine 181. Positions 318–457 (QEAPNGPGAE…PTSTSSSSAR (140 aa)) are disordered. The span at 350 to 374 (SSHSVPSMSISASSQSSSVNSLADA) shows a compositional bias: low complexity. Residues 375 to 395 (SDNEEEEEEEEEEEEEEEEEG) show a composition bias toward acidic residues. Over residues 396-411 (PESREMAMMQEGEHTV) the composition is skewed to basic and acidic residues. The residue at position 416 (serine 416) is a Phosphoserine. Coiled coils occupy residues 488 to 523 (SALR…EEHS) and 576 to 603 (KELA…LQEN). Serine 658 carries the phosphoserine modification. Residues 683 to 715 (LRQHEATRELELRQLQAVQRTRAELTRLQHQTE) are a coiled coil. Phosphoserine occurs at positions 777, 825, and 827. The disordered stretch occupies residues 892–941 (GPVLTPVPEEEEEEEEEGGAPIGTPRDPGDGCPSPDIPPEPPPSHLRQYP). The segment covering 899–909 (PEEEEEEEEEG) has biased composition (acidic residues). Over residues 926–935 (PDIPPEPPPS) the composition is skewed to pro residues. 3 helical membrane passes run 967 to 987 (LLPL…GGGL), 989 to 1009 (AALL…LFLC), and 1014 to 1034 (LPPS…VLSL). The residue at position 1038 (arginine 1038) is a Phosphoserine. The next 2 helical transmembrane spans lie at 1040 to 1060 (LMGV…SLAL) and 1170 to 1190 (LASC…LLKG). The interval 1210–1235 (SASRQLPPGTVAGRRSQTRRALPPWR) is disordered.

This sequence belongs to the protein kinase superfamily. STE Ser/Thr protein kinase family. STE20 subfamily. In terms of assembly, self-associates. Interacts with MAP2K3 and MAP2K6. Interacts with tubulins. Interacts with MAP3K7 and interferes with MAP3K7-binding to CHUK and thus prevents NF-kappa-B activation. Isoform 2 interacts with PCDH8; this complex may also include CDH2. Mg(2+) is required as a cofactor. In terms of processing, autophosphorylated. Phosphorylated by ATM. Phosphorylated on Ser-1038 by MAPK14. This phosphorylation is required PCDH8 for endocytosis.

It is found in the cytoplasmic vesicle membrane. The protein resides in the cytoplasm. The protein localises to the cytoskeleton. It localises to the cell projection. Its subcellular location is the dendrite. It catalyses the reaction L-seryl-[protein] + ATP = O-phospho-L-seryl-[protein] + ADP + H(+). It carries out the reaction L-threonyl-[protein] + ATP = O-phospho-L-threonyl-[protein] + ADP + H(+). Moderately inhibited by staurosporine, a broad-range protein kinase inhibitor. Functionally, serine/threonine-protein kinase involved in different processes such as membrane blebbing and apoptotic bodies formation DNA damage response and MAPK14/p38 MAPK stress-activated MAPK cascade. Phosphorylates itself, MBP, activated MAPK8, MAP2K3, MAP2K6 and tubulins. Activates the MAPK14/p38 MAPK signaling pathway through the specific activation and phosphorylation of the upstream MAP2K3 and MAP2K6 kinases. In response to DNA damage, involved in the G2/M transition DNA damage checkpoint by activating the p38/MAPK14 stress-activated MAPK cascade, probably by mediating phosphorylation of upstream MAP2K3 and MAP2K6 kinases. May affect microtubule organization and stability. May play a role in the osmotic stress-MAPK8 pathway. Prevents MAP3K7-mediated activation of CHUK, and thus NF-kappa-B activation. Isoform 2, but not isoform 1, is required for PCDH8 endocytosis. Following homophilic interactions between PCDH8 extracellular domains, isoform 2 phosphorylates and activates MAPK14/p38 MAPK which in turn phosphorylates isoform 2. This process leads to PCDH8 endocytosis and CDH2 cointernalization. Both isoforms are involved in MAPK14/p38 MAPK activation. In Rattus norvegicus (Rat), this protein is Serine/threonine-protein kinase TAO2 (Taok2).